Reading from the N-terminus, the 306-residue chain is Agmatinase (306 aa).

Residues H126, D149, H151, D153, D230, and D232 each coordinate Mn(2+).

Belongs to the arginase family. Agmatinase subfamily. It depends on Mn(2+) as a cofactor.

The enzyme catalyses agmatine + H2O = urea + putrescine. It participates in amine and polyamine biosynthesis; putrescine biosynthesis via agmatine pathway; putrescine from agmatine: step 1/1. In terms of biological role, catalyzes the formation of putrescine from agmatine. This is Agmatinase from Cronobacter sakazakii (strain ATCC BAA-894) (Enterobacter sakazakii).